The primary structure comprises 118 residues: Large ribosomal subunit protein bL20 (118 aa).

This sequence belongs to the bacterial ribosomal protein bL20 family.

In terms of biological role, binds directly to 23S ribosomal RNA and is necessary for the in vitro assembly process of the 50S ribosomal subunit. It is not involved in the protein synthesizing functions of that subunit. This Lachnoclostridium phytofermentans (strain ATCC 700394 / DSM 18823 / ISDg) (Clostridium phytofermentans) protein is Large ribosomal subunit protein bL20.